The chain runs to 134 residues: Ribosome-binding factor A (134 aa).

Belongs to the RbfA family. In terms of assembly, monomer. Binds 30S ribosomal subunits, but not 50S ribosomal subunits or 70S ribosomes.

The protein localises to the cytoplasm. Functionally, one of several proteins that assist in the late maturation steps of the functional core of the 30S ribosomal subunit. Associates with free 30S ribosomal subunits (but not with 30S subunits that are part of 70S ribosomes or polysomes). Required for efficient processing of 16S rRNA. May interact with the 5'-terminal helix region of 16S rRNA. The chain is Ribosome-binding factor A from Psychrobacter cryohalolentis (strain ATCC BAA-1226 / DSM 17306 / VKM B-2378 / K5).